The primary structure comprises 151 residues: 3-dehydroquinate dehydratase (151 aa).

The active-site Proton acceptor is Tyr-24. Asn-76, His-82, and Asp-89 together coordinate substrate. The active-site Proton donor is the His-102. Substrate is bound by residues 103–104 and Arg-113; that span reads VS.

It belongs to the type-II 3-dehydroquinase family. Homododecamer.

It catalyses the reaction 3-dehydroquinate = 3-dehydroshikimate + H2O. It functions in the pathway metabolic intermediate biosynthesis; chorismate biosynthesis; chorismate from D-erythrose 4-phosphate and phosphoenolpyruvate: step 3/7. In terms of biological role, catalyzes a trans-dehydration via an enolate intermediate. In Rhodopseudomonas palustris (strain HaA2), this protein is 3-dehydroquinate dehydratase.